A 1875-amino-acid polypeptide reads, in one-letter code: Nonribosomal peptide synthetase otaB (1875 aa).

The adenylation 1 stretch occupies residues glycine 202–alanine 590. Residues serine 724 to glycine 800 enclose the Carrier domain. Serine 761 carries the O-(pantetheine 4'-phosphoryl)serine modification. The interval glutamate 836 to leucine 1245 is condensation. The interval glutamine 1264–arginine 1659 is adenylation 2.

The protein belongs to the NRP synthetase family.

The catalysed reaction is 7-carboxymellein + L-phenylalanine + ATP = ochratoxin B + ADP + phosphate + H(+). It functions in the pathway mycotoxin biosynthesis. In terms of biological role, nonribosomal peptide synthetase; part of the gene cluster that mediates the biosynthesis of ochratoxin A (OTA), a mycotoxin composed of a chlorinated type I polyketide dihydroisocoumarin moiety linked to L-phenylalanine, and demonstrated to have nephrotoxic, immunotoxic, genotoxic, neurotoxic, and teratogenic properties. OtaB is responsible for the linking of phenylalanine to the dihydroisocoumarin ring. The pathway begins with the highly reducing polyketide synthase otaA that catalyzes the formation of the isocoumarin group during the initial stages of biosynthesis, starting from one acetate and 4 malonate units, to originate the characteristic pentaketide skeleton 7-methylmellein (7-MM) of the OTA molecule. The newly identified cyclase otaY might be involved in the polyketide cyclization reaction during the initial steps of the OTA biosynthesis. 7-MM is then oxidized into 7-carboxymellein (also called ochratoxin beta) by the cytochrome P450 monooxygenase otaC. The NRPS encoded by the otaB gene is involved in the linking of phenylalanine to the dihydroisocoumarin ring. The reaction catalyzed by NRPS results in the production of ochratoxin B (OTB), which is the non-chlorinated analog of OTA and which subsequently serves as the substrate of the halogenase otaD for chlorination activity to form the final molecular structure of OTA, containing a chlorine atom in the C-5 position of the molecule. The sequence is that of Nonribosomal peptide synthetase otaB from Aspergillus carbonarius (strain ITEM 5010).